A 383-amino-acid chain; its full sequence is Protein delta homolog 2 (383 aa).

An N-terminal signal peptide occupies residues 1–26 (MPSGCRCLHLVCLLCILAAPVKPVRA). EGF-like domains lie at 27–58 (DDCS…LHCE), 62–89 (RMPG…KFCD), 91–129 (DEHV…RDCE), and 131–172 (KEGP…AHCE). The Extracellular segment spans residues 27-306 (DDCSSHCDLA…RQEAGLGKSS (280 aa)). 17 disulfide bridges follow: Cys29–Cys40, Cys33–Cys46, Cys48–Cys57, Cys66–Cys71, Cys79–Cys88, Cys95–Cys107, Cys101–Cys117, Cys119–Cys128, Cys135–Cys148, Cys142–Cys160, Cys162–Cys171, Cys178–Cys189, Cys183–Cys198, Cys200–Cys209, Cys216–Cys227, Cys221–Cys236, and Cys238–Cys247. N-linked (GlcNAc...) asparagine glycosylation occurs at Asn157. Positions 174 to 210 (NVDDCLMRPCANGATCLDGINRFSCLCPEGFAGRFCT) constitute an EGF-like 5; calcium-binding domain. An EGF-like 6; calcium-binding domain is found at 212-248 (NLDDCASRPCQRGARCRDRVHDFDCLCPSGYGGKTCE). Residues 307-327 (LVAVVVFGAVTATLVLSTVLL) traverse the membrane as a helical segment. At 328-383 (TLRAWRRGVCPPGPCCYPAPHYAPARQDQECQVSMLPAGLPLPPDLPPEPGKTTAL) the chain is on the cytoplasmic side.

It localises to the membrane. Its function is as follows. Regulates adipogenesis. This is Protein delta homolog 2 (DLK2) from Sus scrofa (Pig).